We begin with the raw amino-acid sequence, 199 residues long: uncharacterized protein (199 aa).

This is an uncharacterized protein from Treponema pallidum (strain Nichols).